A 232-amino-acid polypeptide reads, in one-letter code: Orotidine 5'-phosphate decarboxylase (232 aa).

Substrate is bound by residues aspartate 16, lysine 38, 65–74 (DLKLHDIGNT), threonine 119, arginine 180, glutamine 189, glycine 209, and arginine 210. Catalysis depends on lysine 67, which acts as the Proton donor.

This sequence belongs to the OMP decarboxylase family. Type 1 subfamily. In terms of assembly, homodimer.

It carries out the reaction orotidine 5'-phosphate + H(+) = UMP + CO2. The protein operates within pyrimidine metabolism; UMP biosynthesis via de novo pathway; UMP from orotate: step 2/2. Its function is as follows. Catalyzes the decarboxylation of orotidine 5'-monophosphate (OMP) to uridine 5'-monophosphate (UMP). The chain is Orotidine 5'-phosphate decarboxylase from Methylorubrum extorquens (strain PA1) (Methylobacterium extorquens).